We begin with the raw amino-acid sequence, 192 residues long: Pyridoxal 5'-phosphate synthase subunit PdxT (192 aa).

53–55 contacts L-glutamine; sequence GES. The Nucleophile role is filled by C82. L-glutamine is bound by residues R108 and 134 to 135; that span reads IR. Catalysis depends on charge relay system residues H170 and E172.

This sequence belongs to the glutaminase PdxT/SNO family. As to quaternary structure, in the presence of PdxS, forms a dodecamer of heterodimers. Only shows activity in the heterodimer.

The catalysed reaction is aldehydo-D-ribose 5-phosphate + D-glyceraldehyde 3-phosphate + L-glutamine = pyridoxal 5'-phosphate + L-glutamate + phosphate + 3 H2O + H(+). It carries out the reaction L-glutamine + H2O = L-glutamate + NH4(+). It participates in cofactor biosynthesis; pyridoxal 5'-phosphate biosynthesis. Functionally, catalyzes the hydrolysis of glutamine to glutamate and ammonia as part of the biosynthesis of pyridoxal 5'-phosphate. The resulting ammonia molecule is channeled to the active site of PdxS. The polypeptide is Pyridoxal 5'-phosphate synthase subunit PdxT (Methanothermobacter thermautotrophicus (strain ATCC 29096 / DSM 1053 / JCM 10044 / NBRC 100330 / Delta H) (Methanobacterium thermoautotrophicum)).